The chain runs to 120 residues: Ribonuclease P protein component (120 aa).

It belongs to the RnpA family. As to quaternary structure, consists of a catalytic RNA component (M1 or rnpB) and a protein subunit.

The enzyme catalyses Endonucleolytic cleavage of RNA, removing 5'-extranucleotides from tRNA precursor.. In terms of biological role, RNaseP catalyzes the removal of the 5'-leader sequence from pre-tRNA to produce the mature 5'-terminus. It can also cleave other RNA substrates such as 4.5S RNA. The protein component plays an auxiliary but essential role in vivo by binding to the 5'-leader sequence and broadening the substrate specificity of the ribozyme. The chain is Ribonuclease P protein component from Pseudoalteromonas atlantica (strain T6c / ATCC BAA-1087).